We begin with the raw amino-acid sequence, 457 residues long: Multidrug resistance protein MdtK (457 aa).

The next 12 membrane-spanning stretches (helical) occupy residues 11–31, 53–73, 93–113, 127–147, 160–180, 189–209, 243–263, 276–296, 314–334, 350–370, 387–407, and 418–438; these read LLALAIPVILAQIAQTAMGFV, IWLPAILFGHGLLLALTPVIA, WLAGFVSVLIMLVLWNAGYII, AVGYLRALLWGAPGYLFFQVA, GMVMGFIGLLVNIPVNYIFIY, GGVGCGVATAAVYWVMFLAMV, LPIALALFFEVTLFAVVALLV, IALNFSSLMFVLPMSLAAAVT, AARTGLMVGVCMATLTAIFTV, VVTLAAHLMLLAAVYQISDSI, IFYITFTAYWVLGLPSGYILA, and PAGFWIGFIIGLTSAAIMMML.

This sequence belongs to the multi antimicrobial extrusion (MATE) (TC 2.A.66.1) family. MdtK subfamily.

It localises to the cell inner membrane. In terms of biological role, multidrug efflux pump that functions probably as a Na(+)/drug antiporter. The polypeptide is Multidrug resistance protein MdtK (Escherichia coli O139:H28 (strain E24377A / ETEC)).